A 211-amino-acid polypeptide reads, in one-letter code: Mediator of RNA polymerase II transcription subunit 20 (211 aa).

It belongs to the Mediator complex subunit 20 family. In terms of assembly, component of the Mediator complex.

It localises to the nucleus. Component of the Mediator complex, a coactivator involved in the regulated transcription of nearly all RNA polymerase II-dependent genes. Mediator functions as a bridge to convey information from gene-specific regulatory proteins to the basal RNA polymerase II transcription machinery. Mediator is recruited to promoters by direct interactions with regulatory proteins and serves as a scaffold for the assembly of a functional preinitiation complex with RNA polymerase II and the general transcription factors. This Gallus gallus (Chicken) protein is Mediator of RNA polymerase II transcription subunit 20 (MED20).